A 284-amino-acid polypeptide reads, in one-letter code: L-fucose dehydrogenase (284 aa).

Arg-19, Ile-21, Asp-40, Lys-41, Asp-62, Val-63, Asn-89, Tyr-154, Lys-158, Ile-187, Thr-189, and Leu-191 together coordinate NAD(+).

Belongs to the short-chain dehydrogenases/reductases (SDR) family.

It catalyses the reaction L-fucose + NAD(+) = L-fucono-1,5-lactone + NADH + H(+). The catalysed reaction is D-arabinose + NAD(+) = D-arabinono-1,5-lactone + NADH + H(+). It carries out the reaction L-galactose + NAD(+) = L-galactono-1,5-lactone + NADH + H(+). The protein operates within carbohydrate degradation; L-fucose degradation. Catalyzes the NAD(+)-dependent oxidation of L-fucose, yielding L-fucono-1,5-lactone, which rapidly converts spontaneously to L-fucone-1,4-lactone. Can also act on D-arabinose and L-galactose, with lower catalytic efficiency. Does not use NADPH. May be the initial enzyme of the putative L-fucose degradation pathway in mammals. The chain is L-fucose dehydrogenase (HSD17B14) from Oryctolagus cuniculus (Rabbit).